The following is a 653-amino-acid chain: DNA polymerase (653 aa).

Belongs to the DNA polymerase type-B family.

It catalyses the reaction DNA(n) + a 2'-deoxyribonucleoside 5'-triphosphate = DNA(n+1) + diphosphate. Replicates viral genomic DNA. The sequence is that of DNA polymerase from Acidianus convivator (ABV).